Consider the following 66-residue polypeptide: Large ribosomal subunit protein bL33c (66 aa).

Belongs to the bacterial ribosomal protein bL33 family.

The protein resides in the plastid. It localises to the chloroplast. The chain is Large ribosomal subunit protein bL33c from Jasminum nudiflorum (Winter jasmine).